A 509-amino-acid chain; its full sequence is Oligo-1,6-glucosidase (509 aa).

Catalysis depends on Asp-198, which acts as the Nucleophile. Catalysis depends on Glu-254, which acts as the Proton donor.

It belongs to the glycosyl hydrolase 13 family.

It is found in the cytoplasm. The enzyme catalyses Hydrolysis of (1-&gt;6)-alpha-D-glucosidic linkages in some oligosaccharides produced from starch and glycogen by alpha-amylase, and in isomaltose.. The sequence is that of Oligo-1,6-glucosidase (malL) from Bacillus sp. (strain F5).